A 216-amino-acid chain; its full sequence is Guanylate kinase (216 aa).

Residues 11–189 (GVLIVISGPS…AVKKIEAILL (179 aa)) enclose the Guanylate kinase-like domain. 18-25 (GPSGAGKG) is a binding site for ATP.

Belongs to the guanylate kinase family.

The protein resides in the cytoplasm. It catalyses the reaction GMP + ATP = GDP + ADP. Essential for recycling GMP and indirectly, cGMP. This is Guanylate kinase from Clostridium perfringens (strain ATCC 13124 / DSM 756 / JCM 1290 / NCIMB 6125 / NCTC 8237 / Type A).